The sequence spans 378 residues: MNKPLRIKHPILSITNSALVDLPAPSNISAWWNFGSLLFLCLMIQILTGLFLAMHYTADISLAFNSVNHICRDVNYGWLLRTMHANGASFFFICIYLHVGRGIYYGSYLFTPTWLVGVIILFLVMGTAFMGYVLPWGQMSFWGATVITNLLSAIPYLGIDLVQWVWGGFAVDNATLTRFFTFHFILPFIVLAATLIHILFLHETGSNNPIGVNSNIDKIPFHPYFTFKDIVGFIMMTMILILLVLINPYLLGDPDNFIPANPLVTPVHIQPEWYFLFAYAILRSIPNKLGGVIALVLSIAILAILPFYHLSKFRGIQFYPINQILFWIMVVTVILLTWIGARPVEEPYVLVGQILTVIYFSYFMFNPLIIKWWDNLLN.

The next 4 membrane-spanning stretches (helical) occupy residues Phe-34–Met-54, Trp-78–Val-99, Trp-114–Leu-134, and Phe-179–Leu-199. Positions 84 and 98 each coordinate heme b. Heme b-binding residues include His-183 and His-197. His-202 contacts a ubiquinone. A run of 4 helical transmembrane segments spans residues Phe-227–Asn-247, Leu-289–His-309, Ile-321–Ala-341, and Tyr-348–Leu-368.

Belongs to the cytochrome b family. As to quaternary structure, the main subunits of complex b-c1 are: cytochrome b, cytochrome c1 and the Rieske protein. The cofactor is heme b.

It localises to the mitochondrion inner membrane. Component of the ubiquinol-cytochrome c reductase complex (complex III or cytochrome b-c1 complex) that is part of the mitochondrial respiratory chain. The b-c1 complex mediates electron transfer from ubiquinol to cytochrome c. Contributes to the generation of a proton gradient across the mitochondrial membrane that is then used for ATP synthesis. In Cochliomyia hominivorax (Primary screw-worm), this protein is Cytochrome b (MT-CYB).